The chain runs to 250 residues: tRNA (guanine-N(1)-)-methyltransferase (250 aa).

Residues G108 and 127 to 132 (LGDFVL) each bind S-adenosyl-L-methionine.

The protein belongs to the RNA methyltransferase TrmD family. In terms of assembly, homodimer.

Its subcellular location is the cytoplasm. It catalyses the reaction guanosine(37) in tRNA + S-adenosyl-L-methionine = N(1)-methylguanosine(37) in tRNA + S-adenosyl-L-homocysteine + H(+). Specifically methylates guanosine-37 in various tRNAs. The polypeptide is tRNA (guanine-N(1)-)-methyltransferase (Streptococcus agalactiae serotype Ia (strain ATCC 27591 / A909 / CDC SS700)).